A 457-amino-acid chain; its full sequence is tRNA-2-methylthio-N(6)-dimethylallyladenosine synthase (457 aa).

Positions 3-120 (KKVYVKTFGC…LPQMIDARRE (118 aa)) constitute an MTTase N-terminal domain. Residues C12, C49, C83, C157, C161, and C164 each contribute to the [4Fe-4S] cluster site. In terms of domain architecture, Radical SAM core spans 143-377 (RVEGPSAFVS…QATIEENVAR (235 aa)). The region spanning 380 to 447 (QSMVGKVERI…PHSLRGELVL (68 aa)) is the TRAM domain.

Belongs to the methylthiotransferase family. MiaB subfamily. As to quaternary structure, monomer. The cofactor is [4Fe-4S] cluster.

It localises to the cytoplasm. It catalyses the reaction N(6)-dimethylallyladenosine(37) in tRNA + (sulfur carrier)-SH + AH2 + 2 S-adenosyl-L-methionine = 2-methylsulfanyl-N(6)-dimethylallyladenosine(37) in tRNA + (sulfur carrier)-H + 5'-deoxyadenosine + L-methionine + A + S-adenosyl-L-homocysteine + 2 H(+). Catalyzes the methylthiolation of N6-(dimethylallyl)adenosine (i(6)A), leading to the formation of 2-methylthio-N6-(dimethylallyl)adenosine (ms(2)i(6)A) at position 37 in tRNAs that read codons beginning with uridine. This Burkholderia lata (strain ATCC 17760 / DSM 23089 / LMG 22485 / NCIMB 9086 / R18194 / 383) protein is tRNA-2-methylthio-N(6)-dimethylallyladenosine synthase.